The sequence spans 134 residues: Putative thioredoxin 2 (134 aa).

One can recognise a Thioredoxin domain in the interval serine 3–lysine 106. Cysteine 31 and cysteine 34 are oxidised to a cystine. The interval alanine 115–glutamine 134 is disordered. Over residues alanine 117 to glutamine 134 the composition is skewed to low complexity.

This sequence belongs to the thioredoxin family.

The protein resides in the cytoplasm. In terms of biological role, component of the thioredoxin-thioredoxin reductase system. Participates in various redox reactions through the reversible oxidation of its active center dithiol to a disulfide and catalyzes dithiol-disulfide exchange reactions. The sequence is that of Putative thioredoxin 2 (trxC) from Streptomyces coelicolor (strain ATCC BAA-471 / A3(2) / M145).